Reading from the N-terminus, the 524-residue chain is Tubulin-specific chaperone E (524 aa).

Residue S2 is modified to N-acetylserine. The 45-residue stretch at 27–71 folds into the CAP-Gly domain; sequence GAVPPVAGLWLGVEWDNPERGKHDGSHEGTMYFKCRHPTGGSFVR. LRR repeat units lie at residues 154–175, 180–201, 206–227, 231–253, 254–273, 279–300, and 309–330; these read NIRVVDLSKNLLSTWDEVILIA, DLEALDLSENKLQFPSDSPTLT, TLKTLVLNKTGITWTEVLHCAP, VLQELYLKSNGISISERPVNALQ, NLRLLDLSSNPSIDESQLCL, RLEHLLLSDIGLSSIHFPDAEI, and ALTYLIVNDNQISEWSFINELD. The region spanning 343–381 is the LRRCT domain; sequence NPLTKGDKAEEIIIAKIGQLKTLNRCQILPEERRGAELD. An N6-acetyllysine modification is found at K460. S492 bears the Phosphoserine mark.

The protein belongs to the TBCE family. In terms of assembly, supercomplex made of cofactors A to E. Cofactors A and D function by capturing and stabilizing tubulin in a quasi-native conformation. Cofactor E binds to the cofactor D-tubulin complex; interaction with cofactor C then causes the release of tubulin polypeptides that are committed to the native state. Cofactors B and E can form a heterodimer which binds to alpha-tubulin and enhances their ability to dissociate tubulin heterodimers. Interacts with TBCD.

Its subcellular location is the cytoplasm. The protein resides in the cytoskeleton. In terms of biological role, tubulin-folding protein; involved in the second step of the tubulin folding pathway and in the regulation of tubulin heterodimer dissociation. Required for correct organization of microtubule cytoskeleton and mitotic splindle, and maintenance of the neuronal microtubule network. The polypeptide is Tubulin-specific chaperone E (Tbce) (Rattus norvegicus (Rat)).